The primary structure comprises 103 residues: Small ribosomal subunit protein uS10 (103 aa).

The protein belongs to the universal ribosomal protein uS10 family. In terms of assembly, part of the 30S ribosomal subunit.

Involved in the binding of tRNA to the ribosomes. The polypeptide is Small ribosomal subunit protein uS10 (Campylobacter lari (strain RM2100 / D67 / ATCC BAA-1060)).